The following is a 194-amino-acid chain: MTIKLIVGLANPGAEYAATRHNAGAWFVDLLAERLRAPLREEAKFFGYTSRVTLGGEDVRLLVPTTFMNLSGKAVAAMASFFRINPDEILVAHDELDLPPGVAKFKLAGAHGGHNGLKDIISKLGNNPNFHRLRIGIGHPGDKNKVVGFVLGKPPVSEQKLIDEAIDEAARCTEMWFTDGLTKATNRLHAFKAQ.

TRNA is bound at residue Tyr-16. The active-site Proton acceptor is His-21. Residues Phe-67, Asn-69, and Asn-115 each coordinate tRNA.

It belongs to the PTH family. In terms of assembly, monomer.

It localises to the cytoplasm. The enzyme catalyses an N-acyl-L-alpha-aminoacyl-tRNA + H2O = an N-acyl-L-amino acid + a tRNA + H(+). Hydrolyzes ribosome-free peptidyl-tRNAs (with 1 or more amino acids incorporated), which drop off the ribosome during protein synthesis, or as a result of ribosome stalling. In terms of biological role, catalyzes the release of premature peptidyl moieties from peptidyl-tRNA molecules trapped in stalled 50S ribosomal subunits, and thus maintains levels of free tRNAs and 50S ribosomes. This Shigella boydii serotype 4 (strain Sb227) protein is Peptidyl-tRNA hydrolase.